Reading from the N-terminus, the 298-residue chain is Acetylglutamate kinase (298 aa).

Substrate-binding positions include Gly-73–Gly-74, Arg-95, and Asn-188.

Belongs to the acetylglutamate kinase family. ArgB subfamily.

It is found in the cytoplasm. It carries out the reaction N-acetyl-L-glutamate + ATP = N-acetyl-L-glutamyl 5-phosphate + ADP. It participates in amino-acid biosynthesis; L-arginine biosynthesis; N(2)-acetyl-L-ornithine from L-glutamate: step 2/4. Its function is as follows. Catalyzes the ATP-dependent phosphorylation of N-acetyl-L-glutamate. The polypeptide is Acetylglutamate kinase (Nostoc punctiforme (strain ATCC 29133 / PCC 73102)).